Here is a 346-residue protein sequence, read N- to C-terminus: Tryptophan--tRNA ligase (346 aa).

ATP is bound by residues 10–12 (QAS) and 18–19 (GN). A 'HIGH' region motif is present at residues 11 to 19 (ASGKQHLGN). Asp140 is a binding site for L-tryptophan. Residues 152 to 154 (GND), Ile191, and 200 to 204 (KMSKS) contribute to the ATP site. Residues 200 to 204 (KMSKS) carry the 'KMSKS' region motif.

The protein belongs to the class-I aminoacyl-tRNA synthetase family. Homodimer.

The protein resides in the cytoplasm. It catalyses the reaction tRNA(Trp) + L-tryptophan + ATP = L-tryptophyl-tRNA(Trp) + AMP + diphosphate + H(+). Its function is as follows. Catalyzes the attachment of tryptophan to tRNA(Trp). This is Tryptophan--tRNA ligase from Mycoplasma pneumoniae (strain ATCC 29342 / M129 / Subtype 1) (Mycoplasmoides pneumoniae).